A 315-amino-acid chain; its full sequence is Uracil-DNA glycosylase (315 aa).

A compositionally biased stretch (low complexity) spans 35 to 80 (AAAAAPAGAGAGASKPARPPAAARPAKGTPAASAATTATGADASAP). The tract at residues 35-88 (AAAAAPAGAGAGASKPARPPAAARPAKGTPAASAATTATGADASAPAPDPGAPT) is disordered. The active-site Proton acceptor is Asp-158.

It belongs to the uracil-DNA glycosylase (UDG) superfamily. UNG family.

It localises to the host nucleus. The catalysed reaction is Hydrolyzes single-stranded DNA or mismatched double-stranded DNA and polynucleotides, releasing free uracil.. Functionally, excises uracil residues from the DNA which can arise as a result of misincorporation of dUMP residues by DNA polymerase or deamination of cytosines. Therefore may reduce deleterious uracil incorporation into the viral genome, particularly in terminally differentiated cells which lack DNA repair enzymes. The sequence is that of Uracil-DNA glycosylase (UL2) from Suid herpesvirus 1 (strain Indiana-Funkhauser / Becker) (SuHV-1).